Reading from the N-terminus, the 344-residue chain is Dihydroorotase (344 aa).

2 residues coordinate Zn(2+): His14 and His16. Residues His16–Arg18 and Asn42 each bind substrate. Residues Lys100, His137, and His175 each contribute to the Zn(2+) site. Lys100 is modified (N6-carboxylysine). His137 lines the substrate pocket. Position 220 (Leu220) interacts with substrate. Asp248 provides a ligand contact to Zn(2+). Residue Asp248 is part of the active site. 2 residues coordinate substrate: His252 and Ala264.

Belongs to the metallo-dependent hydrolases superfamily. DHOase family. Class II DHOase subfamily. Homodimer. It depends on Zn(2+) as a cofactor.

It catalyses the reaction (S)-dihydroorotate + H2O = N-carbamoyl-L-aspartate + H(+). It functions in the pathway pyrimidine metabolism; UMP biosynthesis via de novo pathway; (S)-dihydroorotate from bicarbonate: step 3/3. Catalyzes the reversible cyclization of carbamoyl aspartate to dihydroorotate. This chain is Dihydroorotase, found in Cupriavidus metallidurans (strain ATCC 43123 / DSM 2839 / NBRC 102507 / CH34) (Ralstonia metallidurans).